A 356-amino-acid chain; its full sequence is S-adenosylmethionine:tRNA ribosyltransferase-isomerase (356 aa).

This sequence belongs to the QueA family. Monomer.

The protein resides in the cytoplasm. It catalyses the reaction 7-aminomethyl-7-carbaguanosine(34) in tRNA + S-adenosyl-L-methionine = epoxyqueuosine(34) in tRNA + adenine + L-methionine + 2 H(+). Its pathway is tRNA modification; tRNA-queuosine biosynthesis. Its function is as follows. Transfers and isomerizes the ribose moiety from AdoMet to the 7-aminomethyl group of 7-deazaguanine (preQ1-tRNA) to give epoxyqueuosine (oQ-tRNA). The polypeptide is S-adenosylmethionine:tRNA ribosyltransferase-isomerase (Shigella boydii serotype 18 (strain CDC 3083-94 / BS512)).